The primary structure comprises 98 residues: MRGNNPTLREYILDLHPEPTDLFCYEQLCDSSDEDEIGLDGPDGQAQPATANYYIVTCCYTCGTTVRLCINSTTTDVRTLQQLLMGTCTIVCPSCAQQ.

A Peptide (Met-Gly) (interchain with G-Cter in ubiquitin); by host cross-link involves residue methionine 1. Positions 1-41 are E7 terminal domain; that stretch reads MRGNNPTLREYILDLHPEPTDLFCYEQLCDSSDEDEIGLDG. The LXCXE motif; interaction with host RB1 and TMEM173/STING signature appears at 22–26; the sequence is LFCYE. The segment at 59 to 95 is a zinc-finger region; sequence CYTCGTTVRLCINSTTTDVRTLQQLLMGTCTIVCPSC. The Nuclear export signal motif lies at 77–85; it reads VRTLQQLLM.

It belongs to the papillomaviridae E7 protein family. As to quaternary structure, homodimer. Homooligomer. Interacts with host RB1; this interaction induces dissociation of RB1-E2F1 complex thereby disrupting RB1 activity. Interacts with host EP300; this interaction represses EP300 transcriptional activity. Interacts with protein E2; this interaction inhibits E7 oncogenic activity. Interacts with host TMEM173/STING; this interaction impairs the ability of TMEM173/STING to sense cytosolic DNA and promote the production of type I interferon (IFN-alpha and IFN-beta). Highly phosphorylated.

It is found in the host cytoplasm. Its subcellular location is the host nucleus. Functionally, plays a role in viral genome replication by driving entry of quiescent cells into the cell cycle. Stimulation of progression from G1 to S phase allows the virus to efficiently use the cellular DNA replicating machinery to achieve viral genome replication. E7 protein has both transforming and trans-activating activities. Induces the disassembly of the E2F1 transcription factor from RB1, with subsequent transcriptional activation of E2F1-regulated S-phase genes. Interferes with host histone deacetylation mediated by HDAC1 and HDAC2, leading to transcription activation. Also plays a role in the inhibition of both antiviral and antiproliferative functions of host interferon alpha. Interaction with host TMEM173/STING impairs the ability of TMEM173/STING to sense cytosolic DNA and promote the production of type I interferon (IFN-alpha and IFN-beta). This Homo sapiens (Human) protein is Protein E7.